The primary structure comprises 704 residues: Fatty acid oxidation complex subunit alpha (704 aa).

Residues 1-190 (MSEQKAFSLK…KLGVVDACVP (190 aa)) are enoyl-CoA hydratase. Positions 308–704 (TAVNKVGVLG…RAGEGRNFYD (397 aa)) are 3-hydroxyacyl-CoA dehydrogenase.

It in the N-terminal section; belongs to the enoyl-CoA hydratase/isomerase family. The protein in the central section; belongs to the 3-hydroxyacyl-CoA dehydrogenase family. In terms of assembly, heterotetramer of two alpha chains (FadJ) and two beta chains (FadI).

It localises to the cytoplasm. It catalyses the reaction a (3S)-3-hydroxyacyl-CoA = a (2E)-enoyl-CoA + H2O. It carries out the reaction a 4-saturated-(3S)-3-hydroxyacyl-CoA = a (3E)-enoyl-CoA + H2O. The enzyme catalyses a (3S)-3-hydroxyacyl-CoA + NAD(+) = a 3-oxoacyl-CoA + NADH + H(+). The catalysed reaction is (3S)-3-hydroxybutanoyl-CoA = (3R)-3-hydroxybutanoyl-CoA. It functions in the pathway lipid metabolism; fatty acid beta-oxidation. Functionally, catalyzes the formation of a hydroxyacyl-CoA by addition of water on enoyl-CoA. Also exhibits 3-hydroxyacyl-CoA epimerase and 3-hydroxyacyl-CoA dehydrogenase activities. This is Fatty acid oxidation complex subunit alpha from Vibrio campbellii (strain ATCC BAA-1116).